We begin with the raw amino-acid sequence, 348 residues long: MEFFKKTALAALVMGFSGAALALPNITILATGGTIAGGGDSATKSNYTVGKVGVENLVNAVPQLKDIANVKGEQVVNIGSQDMNDNVWLTLAKKINTDCDKTDGFVITHGTDTMEETAYFLDLTVKCDKPVVMVGAMRPSTSMSADGPFNLYNAVVTAADKASANRGVLVVMNDTVLDGRDVTKTNTTDVATFKSVNYGPLGYIHNGKIDYQRTPARKHTSDTPFDVSKLNELPKVGIVYNYANASDLPAKALVDAGYDGIVSAGVGNGNLYKSVFDTLATAAKTGTAVVRSSRVPTGATTQDAEVDDAKYGFVASGTLNPQKARVLLQLALTQTKDPQQIQQIFNQY.

Positions 1 to 22 are cleaved as a signal peptide; the sequence is MEFFKKTALAALVMGFSGAALA. The Asparaginase/glutaminase domain occupies 24 to 348; it reads PNITILATGG…QQIQQIFNQY (325 aa). The active-site O-isoaspartyl threonine intermediate is Thr-34. Substrate contacts are provided by residues 80 to 81 and 111 to 112; these read SQ and TD. Cysteines 99 and 127 form a disulfide.

This sequence belongs to the asparaginase 1 family. Homotetramer.

The protein resides in the periplasm. The enzyme catalyses L-asparagine + H2O = L-aspartate + NH4(+). The protein is L-asparaginase 2 (ansB) of Escherichia coli (strain K12).